Reading from the N-terminus, the 395-residue chain is Aspergillopepsin-1 (395 aa).

Positions methionine 1–alanine 20 are cleaved as a signal peptide. Positions valine 21–alanine 70 are cleaved as a propeptide — activation peptide. A Peptidase A1 domain is found at tyrosine 86–alanine 392. Residues aspartate 102 and aspartate 284 contribute to the active site. Cysteine 320 and cysteine 355 are disulfide-bonded.

This sequence belongs to the peptidase A1 family. Monomer.

It localises to the secreted. The catalysed reaction is Hydrolysis of proteins with broad specificity. Generally favors hydrophobic residues in P1 and P1', but also accepts Lys in P1, which leads to activation of trypsinogen. Does not clot milk.. Its function is as follows. Secreted aspartic endopeptidase that allows assimilation of proteinaceous substrates. The scissile peptide bond is attacked by a nucleophilic water molecule activated by two aspartic residues in the active site. Shows a broad primary substrate specificity. Favors hydrophobic residues at the P1 and P1' positions, but also accepts a lysine residue in the P1 position, leading to the activation of trypsinogen and chymotrypsinogen A. This chain is Aspergillopepsin-1 (pepA), found in Aspergillus fumigatus (strain CBS 144.89 / FGSC A1163 / CEA10) (Neosartorya fumigata).